The following is a 405-amino-acid chain: Putative polysaccharide ligase RP358 (405 aa).

The next 10 helical transmembrane spans lie at 23-43 (IAAT…ISFI), 77-97 (LFTA…NSLV), 120-140 (VLYI…LFFI), 156-178 (FGLY…AIII), 201-221 (ISDS…FILA), 227-247 (IFFK…PVIA), 270-290 (LFIW…GYGF), 322-342 (ILQI…CLVY), 353-375 (VSNF…MISY), and 377-397 (IWQT…KLLV).

The protein belongs to the O-antigen ligase family.

The protein localises to the membrane. This Rickettsia prowazekii (strain Madrid E) protein is Putative polysaccharide ligase RP358.